We begin with the raw amino-acid sequence, 344 residues long: Ketol-acid reductoisomerase (NADP(+)) (344 aa).

The region spanning 1–181 is the KARI N-terminal Rossmann domain; the sequence is MATMYYEQNI…GAARGGLLET (181 aa). Residues 25-28, Arg48, Ser52, and 82-85 each bind NADP(+); these read YGSQ and DERQ. Residue His107 is part of the active site. NADP(+) is bound at residue Gly133. In terms of domain architecture, KARI C-terminal knotted spans 182 to 327; sequence TFKEETETDL…AKLREMMPFI (146 aa). Mg(2+)-binding residues include Asp190, Glu194, Glu226, and Glu230. Ser251 lines the substrate pocket.

Belongs to the ketol-acid reductoisomerase family. Mg(2+) serves as cofactor.

It carries out the reaction (2R)-2,3-dihydroxy-3-methylbutanoate + NADP(+) = (2S)-2-acetolactate + NADPH + H(+). It catalyses the reaction (2R,3R)-2,3-dihydroxy-3-methylpentanoate + NADP(+) = (S)-2-ethyl-2-hydroxy-3-oxobutanoate + NADPH + H(+). The protein operates within amino-acid biosynthesis; L-isoleucine biosynthesis; L-isoleucine from 2-oxobutanoate: step 2/4. It participates in amino-acid biosynthesis; L-valine biosynthesis; L-valine from pyruvate: step 2/4. In terms of biological role, involved in the biosynthesis of branched-chain amino acids (BCAA). Catalyzes an alkyl-migration followed by a ketol-acid reduction of (S)-2-acetolactate (S2AL) to yield (R)-2,3-dihydroxy-isovalerate. In the isomerase reaction, S2AL is rearranged via a Mg-dependent methyl migration to produce 3-hydroxy-3-methyl-2-ketobutyrate (HMKB). In the reductase reaction, this 2-ketoacid undergoes a metal-dependent reduction by NADPH to yield (R)-2,3-dihydroxy-isovalerate. The protein is Ketol-acid reductoisomerase (NADP(+)) of Lysinibacillus sphaericus (strain C3-41).